Reading from the N-terminus, the 339-residue chain is Sphingomyelinase D (339 aa).

The first 21 residues, 1 to 21, serve as a signal peptide directing secretion; sequence MVSLLRLCSFLLAAGSILVQG. Histidine 60 is an active-site residue. Residues glutamate 80, aspartate 82, and aspartate 128 each coordinate Mg(2+). The SMD-tail motif lies at 309–316; that stretch reads ATVDDNPW. The disordered stretch occupies residues 313–339; that stretch reads DNPWSSMSKKGSSKSSWVKGEVPSIAH. The segment covering 317–328 has biased composition (low complexity); the sequence is SSMSKKGSSKSS.

The protein belongs to the sphingomyelinase D/phospholipase D family. Mg(2+) is required as a cofactor.

The protein localises to the secreted. It catalyses the reaction a sphingomyelin + H2O = an N-acylsphing-4-enine 1-phosphate + choline + H(+). In terms of biological role, catalyzes the hydrolysis of sphingomyelin. Sphingomyelinases D are produced by some spider in their venoms, but also by arthropods such as ticks, or pathogenic bacteria and fungi. They might play a role in pathogenicity through different mechanisms, such as membrane destabilization and host cell penetration, but also pulmonary inflammation and cutaneous lesions. This is Sphingomyelinase D from Arthroderma benhamiae (strain ATCC MYA-4681 / CBS 112371) (Trichophyton mentagrophytes).